Here is a 399-residue protein sequence, read N- to C-terminus: S-adenosylmethionine synthase (399 aa).

An ATP-binding site is contributed by His15. Residue Asp17 participates in Mg(2+) binding. Glu43 is a K(+) binding site. Residues Glu56 and Gln99 each contribute to the L-methionine site. The tract at residues Gln99–Asn109 is flexible loop. ATP is bound by residues Asp174–Lys176, Arg244–Phe245, Asp253, Arg259–Lys260, Ala276, and Lys280. Residue Asp253 coordinates L-methionine. Residue Lys284 coordinates L-methionine.

Belongs to the AdoMet synthase family. In terms of assembly, homotetramer; dimer of dimers. Requires Mg(2+) as cofactor. K(+) is required as a cofactor.

Its subcellular location is the cytoplasm. It carries out the reaction L-methionine + ATP + H2O = S-adenosyl-L-methionine + phosphate + diphosphate. It participates in amino-acid biosynthesis; S-adenosyl-L-methionine biosynthesis; S-adenosyl-L-methionine from L-methionine: step 1/1. In terms of biological role, catalyzes the formation of S-adenosylmethionine (AdoMet) from methionine and ATP. The overall synthetic reaction is composed of two sequential steps, AdoMet formation and the subsequent tripolyphosphate hydrolysis which occurs prior to release of AdoMet from the enzyme. In Salinispora arenicola (strain CNS-205), this protein is S-adenosylmethionine synthase.